The chain runs to 284 residues: Agamous-like MADS-box protein AGL49 (284 aa).

The segment at 1 to 20 (MAPRQKKPNKSDDDDGDLHR) is disordered. Residues 21-66 (KKQSFFKQRFPGFKKKASELSVLCGNSVGFICYGPDNDLHVWPQSQ) form the MADS-box domain.

In terms of assembly, interacts with MEE14/CBP1.

It localises to the nucleus. Probable transcription factor that may function in the maintenance of the proper function of the central cell in pollen tube attraction. This chain is Agamous-like MADS-box protein AGL49, found in Arabidopsis thaliana (Mouse-ear cress).